The following is a 47-amino-acid chain: MPREHDKQSKFAPSHLGTKPVEYKRNKGKKMHDKSGETPIIMQTKGE.

The segment at Met1–Glu47 is disordered.

This sequence belongs to the SspN family.

Its subcellular location is the spore core. The chain is Small, acid-soluble spore protein N from Bacillus licheniformis (strain ATCC 14580 / DSM 13 / JCM 2505 / CCUG 7422 / NBRC 12200 / NCIMB 9375 / NCTC 10341 / NRRL NRS-1264 / Gibson 46).